We begin with the raw amino-acid sequence, 272 residues long: PHD finger protein ALFIN-LIKE 6 (272 aa).

Residues 1 to 23 show a composition bias toward gly residues; the sequence is MEGGGGGGGGGGGGGGGGGGGGA. Disordered regions lie at residues 1–24 and 162–218; these read MEGG…GGAP and QAKE…DNTL. Positions 168–182 are enriched in low complexity; sequence PNSSSKSNKPSSKVQ. A compositionally biased stretch (basic and acidic residues) spans 183–200; sequence SKAESRSKSKLSAPKDEE. The segment covering 201–214 has biased composition (acidic residues); sequence GSGDDEGEEEEDDH. The PHD-type zinc-finger motif lies at 216–268; the sequence is NTLCGTCGTNDGKDEFWICCDNCEKWYHGKCVKITPARAEHIKQYKCPDCTNK.

The protein belongs to the Alfin family.

The protein localises to the nucleus. Its function is as follows. Histone-binding component that specifically recognizes H3 tails trimethylated on 'Lys-4' (H3K4me3), which mark transcription start sites of virtually all active genes. The polypeptide is PHD finger protein ALFIN-LIKE 6 (Oryza sativa subsp. japonica (Rice)).